Here is a 224-residue protein sequence, read N- to C-terminus: Peroxiredoxin-6 (224 aa).

Residues Leu5–Leu169 form the Thioredoxin domain. Positions Asp31–Pro40 are required and sufficient for targeting to lysosomes and lamellar bodies. Thr44 is subject to Phosphothreonine. The Cysteine sulfenic acid (-SOH) intermediate; for peroxidase activity role is filled by Cys47. Position 63 is an N6-acetyllysine (Lys63). Tyr89 bears the Phosphotyrosine mark. Asp140 functions as the For phospholipase activity in the catalytic mechanism. At Thr177 the chain carries Phosphothreonine; by MAPK. An N6-acetyllysine; alternate modification is found at Lys209. At Lys209 the chain carries N6-succinyllysine; alternate.

The protein belongs to the peroxiredoxin family. Prx6 subfamily. As to quaternary structure, homodimer. Interacts with GSTP1; mediates PRDX6 glutathionylation and regeneration. Interacts with APEX1. Interacts with STH. May interact with FAM168B. May interact with HTR2A. Post-translationally, irreversibly inactivated by overoxidation of Cys-47 to sulfinic acid (Cys-SO(2)H) and sulfonic acid (Cys-SO(3)H) forms upon oxidative stress. In terms of processing, phosphorylation at Thr-177 by MAP kinases increases the phospholipase activity of the enzyme. The phosphorylated form exhibits a greater lysophosphatidylcholine acyltransferase activity compared to the non-phosphorylated form.

The protein resides in the cytoplasm. It localises to the lysosome. The enzyme catalyses a hydroperoxide + 2 glutathione = an alcohol + glutathione disulfide + H2O. It carries out the reaction a 1,2-diacyl-sn-glycero-3-phosphocholine + H2O = a 1-acyl-sn-glycero-3-phosphocholine + a fatty acid + H(+). It catalyses the reaction a 1-acyl-sn-glycero-3-phosphocholine + an acyl-CoA = a 1,2-diacyl-sn-glycero-3-phosphocholine + CoA. The catalysed reaction is 1-hexadecanoyl-sn-glycero-3-phosphocholine + hexadecanoyl-CoA = 1,2-dihexadecanoyl-sn-glycero-3-phosphocholine + CoA. The enzyme catalyses 1,2-dihexadecanoyl-sn-glycero-3-phosphocholine + H2O = 1-hexadecanoyl-sn-glycero-3-phosphocholine + hexadecanoate + H(+). Functionally, thiol-specific peroxidase that catalyzes the reduction of hydrogen peroxide and organic hydroperoxides to water and alcohols, respectively. Can reduce H(2)O(2) and short chain organic, fatty acid, and phospholipid hydroperoxides. Also has phospholipase activity, and can therefore either reduce the oxidized sn-2 fatty acyl group of phospholipids (peroxidase activity) or hydrolyze the sn-2 ester bond of phospholipids (phospholipase activity). These activities are dependent on binding to phospholipids at acidic pH and to oxidized phospholipds at cytosolic pH. Plays a role in cell protection against oxidative stress by detoxifying peroxides and in phospholipid homeostasis. Exhibits acyl-CoA-dependent lysophospholipid acyltransferase which mediates the conversion of lysophosphatidylcholine (1-acyl-sn-glycero-3-phosphocholine or LPC) into phosphatidylcholine (1,2-diacyl-sn-glycero-3-phosphocholine or PC). Shows a clear preference for LPC as the lysophospholipid and for palmitoyl CoA as the fatty acyl substrate. This Macaca fascicularis (Crab-eating macaque) protein is Peroxiredoxin-6 (PRDX6).